A 741-amino-acid polypeptide reads, in one-letter code: 1,4-alpha-glucan branching enzyme GlgB (741 aa).

The Nucleophile role is filled by aspartate 420. Glutamate 473 acts as the Proton donor in catalysis.

This sequence belongs to the glycosyl hydrolase 13 family. GlgB subfamily. Monomer.

The catalysed reaction is Transfers a segment of a (1-&gt;4)-alpha-D-glucan chain to a primary hydroxy group in a similar glucan chain.. The protein operates within glycan biosynthesis; glycogen biosynthesis. Its function is as follows. Catalyzes the formation of the alpha-1,6-glucosidic linkages in glycogen by scission of a 1,4-alpha-linked oligosaccharide from growing alpha-1,4-glucan chains and the subsequent attachment of the oligosaccharide to the alpha-1,6 position. The sequence is that of 1,4-alpha-glucan branching enzyme GlgB from Pseudomonas syringae pv. syringae (strain B728a).